Reading from the N-terminus, the 337-residue chain is Trace amine-associated receptor 5 (337 aa).

The Extracellular segment spans residues 1–34; it reads MRAVFIQGAEEHPAAFCYQVNGSCPRTVHTLGIQ. Asn-21 carries N-linked (GlcNAc...) asparagine glycosylation. 2 cysteine pairs are disulfide-bonded: Cys-24–Cys-188 and Cys-99–Cys-192. A helical transmembrane segment spans residues 35–55; the sequence is LVIYLACAAGMLIIVLGNLFV. Residues 56 to 70 lie on the Cytoplasmic side of the membrane; it reads AFAVSYFKALHTPTN. The chain crosses the membrane as a helical span at residues 71-91; sequence FLLLSLALADMFLGLLVLPLS. The Extracellular segment spans residues 92–109; the sequence is TIRSVESCWFFGDFLCRL. The helical transmembrane segment at 110–130 threads the bilayer; it reads HTYLDPLFCLTSIFHLCFISI. Residues 131–154 lie on the Cytoplasmic side of the membrane; that stretch reads DRHCAICDPLLYPSKFTVRVALRY. The helical transmembrane segment at 155–175 threads the bilayer; the sequence is ILAGWGVPAAYTSLFLYTDVV. Residues 176-189 form an extracellular Loop 2 (ECL2) region; sequence ETRLSQWLEEMPCV. Residues 176-204 are Extracellular-facing; it reads ETRLSQWLEEMPCVGSCQLLLNKFWGWLN. A helical transmembrane segment spans residues 205–225; the sequence is FPLFFVPCLIMISLYVKIFVV. Over 226-253 the chain is Cytoplasmic; it reads ATRQAQQITTLSKNLAGAAKHDRKAAKT. The chain crosses the membrane as a helical span at residues 254-274; sequence LGIAVGIYLLCWLPFTIDTMV. Residues 275–284 lie on the Extracellular side of the membrane; that stretch reads DSLLHFITPP. A helical membrane pass occupies residues 285-307; that stretch reads LVFDIFIWFAYFNSACNPIIYVF. The Cytoplasmic portion of the chain corresponds to 308 to 337; sequence SYQWFRKALKLTLSQKVFSPQTRTVDLYQE.

It belongs to the G-protein coupled receptor 1 family.

It localises to the cell membrane. Functionally, olfactory receptor specific for trimethylamine, a trace amine. Trimethylamine is a bacterial metabolite found in some animal odors. Trimethylamine-binding causes a conformation change that triggers signaling via G(s)-class of G alpha proteins (GNAL or GNAS). The chain is Trace amine-associated receptor 5 (TAAR5) from Pan troglodytes (Chimpanzee).